The following is a 701-amino-acid chain: Elongation factor G (701 aa).

One can recognise a tr-type G domain in the interval 8-291 (SRYRNIGIVA…AVIDYLPAPV (284 aa)). GTP-binding positions include 17–24 (AHVDAGKT), 89–93 (DTPGH), and 143–146 (NKMD).

It belongs to the TRAFAC class translation factor GTPase superfamily. Classic translation factor GTPase family. EF-G/EF-2 subfamily.

It localises to the cytoplasm. Its function is as follows. Catalyzes the GTP-dependent ribosomal translocation step during translation elongation. During this step, the ribosome changes from the pre-translocational (PRE) to the post-translocational (POST) state as the newly formed A-site-bound peptidyl-tRNA and P-site-bound deacylated tRNA move to the P and E sites, respectively. Catalyzes the coordinated movement of the two tRNA molecules, the mRNA and conformational changes in the ribosome. In Pseudomonas fluorescens (strain SBW25), this protein is Elongation factor G.